Consider the following 316-residue polypeptide: Olfactory receptor 2AG1 (316 aa).

Residues 1–25 (MELWNFTLGSGFILVGILNDSGSPE) lie on the Extracellular side of the membrane. Residues Asn5 and Asn19 are each glycosylated (N-linked (GlcNAc...) asparagine). Residues 26 to 49 (LLCATITILYLLALISNGLLLLAI) form a helical membrane-spanning segment. Topologically, residues 50-57 (TMEARLHM) are cytoplasmic. A helical transmembrane segment spans residues 58 to 79 (PMYLLLGQLSLMDLLFTSVVTP). Residues 80-100 (KALADFLRRENTISFGGCALQ) are Extracellular-facing. A disulfide bridge links Cys97 with Cys189. A helical transmembrane segment spans residues 101–120 (MFLALTMGGAEDLLLAFMAY). At 121 to 139 (DRYVAICHPLTYMTLMSSR) the chain is on the cytoplasmic side. Residues 140-158 (ACWLMVATSWILASLSALI) form a helical membrane-spanning segment. At 159 to 195 (YTVYTMHYPFCRAQEIRHLLCEIPHLLKVACADTSRY) the chain is on the extracellular side. The helical transmembrane segment at 196–219 (ELMVYVMGVTFLIPSLAAILASYT) threads the bilayer. Topologically, residues 220-236 (QILLTVLHMPSNEGRKK) are cytoplasmic. The chain crosses the membrane as a helical span at residues 237 to 259 (ALVTCSSHLTVVGMFYGAATFMY). Topologically, residues 260 to 272 (VLPSSFHSTRQDN) are extracellular. The chain crosses the membrane as a helical span at residues 273–292 (IISVFYTIVTPALNPLIYSL). The Cytoplasmic portion of the chain corresponds to 293–316 (RNKEVMRALRRVLGKYMLPAHSTL).

The protein belongs to the G-protein coupled receptor 1 family.

Its subcellular location is the cell membrane. Its function is as follows. Odorant receptor. The chain is Olfactory receptor 2AG1 (OR2AG1) from Homo sapiens (Human).